The sequence spans 711 residues: Polyribonucleotide nucleotidyltransferase (711 aa).

Residues Asp-491 and Asp-497 each contribute to the Mg(2+) site. A KH domain is found at 559-618; it reads PRLITIKINPEKIRDVIGKGGAVIRALTEETGTQIDISDEGVVTIASVDAAAGQEAKRRI. Residues 628–696 form the S1 motif domain; sequence GKIYEGTVLK…DRGRLKLSMK (69 aa).

The protein belongs to the polyribonucleotide nucleotidyltransferase family. It depends on Mg(2+) as a cofactor.

Its subcellular location is the cytoplasm. The catalysed reaction is RNA(n+1) + phosphate = RNA(n) + a ribonucleoside 5'-diphosphate. Involved in mRNA degradation. Catalyzes the phosphorolysis of single-stranded polyribonucleotides processively in the 3'- to 5'-direction. The protein is Polyribonucleotide nucleotidyltransferase of Janthinobacterium sp. (strain Marseille) (Minibacterium massiliensis).